The sequence spans 95 residues: MGSMSVWHWVIVAVVVMLLFGRGKVSELMGDVAKGIKAFKKGMADDETQPNTATSVPPVGPNDPVRTLPHQGAPGTAPQPPHVQPHVPAGDHKAV.

A helical transmembrane segment spans residues methionine 1–glycine 21. Residues glycine 42–valine 95 form a disordered region.

Belongs to the TatA/E family. The Tat system comprises two distinct complexes: a TatABC complex, containing multiple copies of TatA, TatB and TatC subunits, and a separate TatA complex, containing only TatA subunits. Substrates initially bind to the TatABC complex, which probably triggers association of the separate TatA complex to form the active translocon.

The protein resides in the cell inner membrane. Functionally, part of the twin-arginine translocation (Tat) system that transports large folded proteins containing a characteristic twin-arginine motif in their signal peptide across membranes. TatA could form the protein-conducting channel of the Tat system. This is Sec-independent protein translocase protein TatA from Methylorubrum extorquens (strain PA1) (Methylobacterium extorquens).